The chain runs to 1481 residues: Cystic fibrosis transmembrane conductance regulator (1481 aa).

The Cytoplasmic portion of the chain corresponds to 1–77 (MQRSPLEKAS…KLINALRRCF (77 aa)). A helical transmembrane segment spans residues 78–98 (FWRFTFYGILLYLGEVTKAVQ). Positions 81–365 (FTFYGILLYL…WAVQTWYDSL (285 aa)) constitute an ABC transmembrane type-1 1 domain. Residues 99–122 (PLLLGRIIASYDPDNKTERSIAIY) are Extracellular-facing. A helical membrane pass occupies residues 123–146 (LGIGLCLLFIVRTLLLHPAIFGLH). The Cytoplasmic portion of the chain corresponds to 147-195 (HIGMQMRIAMFSLIYKKTLKLSSRVLDKISIGQLVSLLSNNLNKFDEGL). A helical transmembrane segment spans residues 196 to 216 (ALAHFVWIAPLQVALLMGLIW). The Extracellular portion of the chain corresponds to 217–222 (ELLQAS). A helical membrane pass occupies residues 223–243 (AFCGLGFLIVLALFQAGLGRM). At 244–298 (MMKYRDQRAGKINERLVITSEMIENIQSVKAYCWEEAMEKIIENLRQTELKLTRK) the chain is on the cytoplasmic side. The helical transmembrane segment at 299 to 319 (AAYVRYFNSSAFFFSGFFVVF) threads the bilayer. Over 320–339 (LSVLPYALIKGIVLRKIFTT) the chain is Extracellular. A helical transmembrane segment spans residues 340-358 (ISFCIVLRMAVTRQFPWAV). Over 359–858 (QTWYDSLGAI…YLRYITLHKS (500 aa)) the chain is Cytoplasmic. ATP contacts are provided by residues Trp401, Ser434, 458–465 (GSTGAGKT), and Gln493. An ABC transporter 1 domain is found at 423–646 (NGDDNLFFSN…RPDFSSKLMG (224 aa)). Residue Cys524 is the site of S-palmitoyl cysteine attachment. Phosphoserine is present on residues Ser549 and Ser660. The disordered R region stretch occupies residues 654-831 (SSERRNSILT…EEINEEDLKE (178 aa)). Phosphoserine; by PKA is present on Ser670. The residue at position 686 (Ser686) is a Phosphoserine. A Glycyl lysine isopeptide (Lys-Gly) (interchain with G-Cter in ubiquitin) cross-link involves residue Lys688. Phosphoserine occurs at positions 700 and 712. Thr717 is modified (phosphothreonine). Phosphoserine is present on residues Ser737, Ser753, Ser768, Ser790, Ser795, and Ser813. The helical transmembrane segment at 859-879 (LIFVLIWCLVIFLAEVAASLV) threads the bilayer. In terms of domain architecture, ABC transmembrane type-1 2 spans 859 to 1155 (LIFVLIWCLV…AVNSSIDVDS (297 aa)). Residues 880 to 918 (VLWLLGNTPFQDKGNSTYSRNNSYAVIITNTSSYYVFYI) are Extracellular-facing. Asn894, Asn900, and Asn909 each carry an N-linked (GlcNAc...) asparagine glycan. A discontinuously helical membrane pass occupies residues 919–939 (YVGVADTLLALGFFRGLPLVH). Topologically, residues 940–990 (TLITVSKMLHHKMLHSVLQAPMSTLNTLKAGGILNRFSKDIAILDDLLPLT) are cytoplasmic. A helical membrane pass occupies residues 991-1011 (IFDFIQLLLIVIGAIAVVSVL). At 1012 to 1013 (QP) the chain is on the extracellular side. The helical transmembrane segment at 1014-1034 (YIFLATVPVIAAFILLRAYFL) threads the bilayer. Over 1035-1095 (QTSQQLKQLE…TANWFLYLST (61 aa)) the chain is Cytoplasmic. A helical membrane pass occupies residues 1096 to 1116 (LRWFQMRIEMIFVIFFIAVTF). Over 1117–1130 (ISILTTGEGEGTVG) the chain is Extracellular. Residues 1131 to 1151 (IILTLAMNIMSTLQWAVNSSI) traverse the membrane as a helical segment. Residues 1152 to 1481 (DVDSLMRSVS…TEEEVQETRL (330 aa)) lie on the Cytoplasmic side of the membrane. An ABC transporter 2 domain is found at 1211–1444 (MTIKDLTAKY…KSLFRQAISH (234 aa)). ATP contacts are provided by residues Tyr1220 and 1245-1252 (GRTGSGKS). The tract at residues 1387 to 1481 (RALKQAFADC…TEEEVQETRL (95 aa)) is interaction with GORASP2. Cys1396 carries the S-palmitoyl cysteine lipid modification. 2 positions are modified to phosphoserine: Ser1445 and Ser1457. The disordered stretch occupies residues 1453–1481 (HRNSSKYKSQPQIASLKEETEEEVQETRL). Acidic residues predominate over residues 1471 to 1481 (ETEEEVQETRL). Positions 1479–1481 (TRL) match the PDZ-binding motif.

Belongs to the ABC transporter superfamily. ABCC family. CFTR transporter (TC 3.A.1.202) subfamily. As to quaternary structure, monomer; does not require oligomerization for channel activity. May form oligomers in the membrane. Interacts with SLC26A3, SLC26A6 and NHERF1. Interacts with SHANK2. Interacts with MYO6. Interacts (via C-terminus) with GOPC (via PDZ domain); this promotes CFTR internalization and thereby decreases channel activity. Interacts with SLC4A7 through NHERF1. Found in a complex with MYO5B and RAB11A. Interacts with ANO1. Interacts with SLC26A8. Interacts with AHCYL1; the interaction increases CFTR activity. Interacts with CSE1L. The core-glycosylated form interacts with GORASP2 (via PDZ GRASP-type 1 domain) in respone to ER stress. Interacts with MARCHF2; the interaction leads to CFTR ubiqtuitination and degradation. Interacts with ADGRG2. Post-translationally, N-glycosylated. In terms of processing, phosphorylated; cAMP treatment promotes phosphorylation and activates the channel. Dephosphorylation decreases the ATPase activity (in vitro). Phosphorylation at PKA sites activates the channel. Phosphorylation at PKC sites enhances the response to phosphorylation by PKA. Phosphorylated by AMPK; this inhibits channel activity. Ubiquitinated, leading to its degradation in the lysosome. Deubiquitination by USP10 in early endosomes enhances its endocytic recycling to the cell membrane. Ubiquitinated by RNF185 during ER stress. Ubiquitinated by MARCHF2.

It is found in the apical cell membrane. Its subcellular location is the early endosome membrane. The protein localises to the cell membrane. The protein resides in the recycling endosome membrane. It localises to the endoplasmic reticulum membrane. It is found in the nucleus. The enzyme catalyses ATP + H2O + closed Cl(-) channel = ADP + phosphate + open Cl(-) channel.. It carries out the reaction chloride(in) = chloride(out). It catalyses the reaction hydrogencarbonate(in) = hydrogencarbonate(out). The catalysed reaction is ATP + H2O = ADP + phosphate + H(+). Its function is as follows. Epithelial ion channel that plays an important role in the regulation of epithelial ion and water transport and fluid homeostasis. Mediates the transport of chloride ions across the cell membrane. Possesses an intrinsic ATPase activity and utilizes ATP to gate its channel; the passive flow of anions through the channel is gated by cycles of ATP binding and hydrolysis by the ATP-binding domains. The ion channel is also permeable to HCO(3)(-); selectivity depends on the extracellular chloride concentration. Exerts its function also by modulating the activity of other ion channels and transporters. Contributes to the regulation of the pH and the ion content of the epithelial fluid layer. Modulates the activity of the epithelial sodium channel (ENaC) complex, in part by regulating the cell surface expression of the ENaC complex. May regulate bicarbonate secretion and salvage in epithelial cells by regulating the transporter SLC4A7. Can inhibit the chloride channel activity of ANO1. Plays a role in the chloride and bicarbonate homeostasis during sperm epididymal maturation and capacitation. This Aotus nancymaae (Ma's night monkey) protein is Cystic fibrosis transmembrane conductance regulator.